The primary structure comprises 85 residues: Sugar transporter SemiSWEET (85 aa).

Residues 2-59 (ENLIGYVAAFLTTVSFLPQVLRVVMTKQTRDISRNMYIMFFLGVVLWFVYGILRSDLP) form the PQ-loop domain. The next 3 helical transmembrane spans lie at 5-25 (IGYVAAFLTTVSFLPQVLRVV), 33-53 (ISRNMYIMFFLGVVLWFVYGI), and 57-77 (DLPIILANVVTLFFVTIILYY).

In terms of assembly, homodimer.

Its subcellular location is the cell membrane. Its function is as follows. The homodimer mediates transmembrane sugar transport down a concentration gradient. Transport is probably effected by rocking-type movements, where a cargo-binding cavity opens first on one and then on the other side of the membrane. In Leptospira biflexa serovar Patoc (strain Patoc 1 / ATCC 23582 / Paris), this protein is Sugar transporter SemiSWEET.